The chain runs to 325 residues: Biotin synthase (325 aa).

The Radical SAM core domain occupies 46 to 270 (NNSNNIDLCS…IAICKLILPN (225 aa)). [4Fe-4S] cluster-binding residues include Cys-64, Cys-68, and Cys-71. Positions 107, 139, 198, and 274 each coordinate [2Fe-2S] cluster.

Belongs to the radical SAM superfamily. Biotin synthase family. As to quaternary structure, homodimer. Requires [4Fe-4S] cluster as cofactor. The cofactor is [2Fe-2S] cluster.

The enzyme catalyses (4R,5S)-dethiobiotin + (sulfur carrier)-SH + 2 reduced [2Fe-2S]-[ferredoxin] + 2 S-adenosyl-L-methionine = (sulfur carrier)-H + biotin + 2 5'-deoxyadenosine + 2 L-methionine + 2 oxidized [2Fe-2S]-[ferredoxin]. It participates in cofactor biosynthesis; biotin biosynthesis; biotin from 7,8-diaminononanoate: step 2/2. Catalyzes the conversion of dethiobiotin (DTB) to biotin by the insertion of a sulfur atom into dethiobiotin via a radical-based mechanism. This is Biotin synthase from Methanococcus aeolicus (strain ATCC BAA-1280 / DSM 17508 / OCM 812 / Nankai-3).